The chain runs to 962 residues: MGKPTLLEPGHLYNVPAEHKNDVPIHYIITWIKQRLPEFGGAIPTSLADRVLIIKSRTGSGKSTALPVHVFRILRNENTHSFQKYLGRSVICTQPRVLTAVTLAKDIGASTHYPDMILGQTVGYQTKPLTEKPNRGLIYATAGVLLAQLHTMTDDEIASRYAFMIIDEAHERALGIDLMLMYIKSMLERMLQRGSIGALRIPFVILTSATIDTHKYSTYFGIGKENIILVEGRQYGVETHWPLYNTNNYIKTACETALTIHKENIHDRPTEADILIFMPGMAEIRFLSMLLNNANMDLAKEKLPLMLILPIDSEAIAQENEAYLGLKAEIKNLWVKNPLTAKVEKPLRRVIVSTVVAETGLTIETLKYVIDPGWNRSIETYYPEWAGGLITRPAAQSRIEQRKGRVGRVFPGHFYPLYTKHVFEQIPAQQYPEIITEGPGAIFLSIVVETIKKNKEGVFKAEEIDMLDPPPTDALASAIERAIVAGLLTRGEKGLQLTQLGDIASRFSFLSIEEARMCFSGYFWQAAISDIATILAVVSVADKKLTNLLDSKQRNGAMLAEAVLAGIPPFLQNIDNAYTNIHLLLADDLLEGLFIFEGFQHAIVYFINNKVNNVAKHLREWCEKKMLKYSSMVQILARREDILNELAIVGLNPFHHWQNRLASANAETFLKRVCTLKQCMYEAYRLNCFCYDEHRLLYTGRNGIHFSYHDAVIKNPSCIVTPRIMLSPVSKQYMEWRLEPSFVSVLDGFVNVDINFLLPRQEIPNILGGVEDEEEEPPLPIQVFLHKYVKTHFHFSGKSFKELKMKPGQTIKFPETTLINMIPDIPKNVVQTYLEISVCHQYSFKRLIYCETFYTDMDDVQHENSVELIGLPMAAHHLTINDFNKLYHLLKPDGFLMVYDLHQSQEAFWLHSLQDALGHHTIRRDMDFHTIPEWETIFKECGFTPIFSKQPSEHELFIVFKK.

Residues 43–229 enclose the Helicase ATP-binding domain; sequence IPTSLADRVL…FGIGKENIIL (187 aa). 56–63 lines the ATP pocket; the sequence is SRTGSGKS. Positions 167-170 match the DEAH box motif; sequence DEAH. The Helicase C-terminal domain occupies 253-459; sequence ACETALTIHK…TIKKNKEGVF (207 aa). A helical membrane pass occupies residues 521-541; that stretch reads GYFWQAAISDIATILAVVSVA.

Belongs to the DEAD box helicase family. DEAH subfamily.

It localises to the host membrane. Its subcellular location is the virion. The enzyme catalyses ATP + H2O = ADP + phosphate + H(+). This chain is Putative RNA Helicase B962L, found in African swine fever virus (isolate Warthog/Namibia/Wart80/1980) (ASFV).